The chain runs to 526 residues: Cytochrome P450 monooxygenase milC (526 aa).

A helical membrane pass occupies residues 2–20 (AIHAAYIFIAATLIALYVA). Residue Cys470 participates in heme binding.

Belongs to the cytochrome P450 family. The cofactor is heme.

Its subcellular location is the membrane. The catalysed reaction is cordypyrone A + reduced [NADPH--hemoprotein reductase] + O2 = cordypyrone B + oxidized [NADPH--hemoprotein reductase] + H2O + H(+). The protein operates within secondary metabolite biosynthesis. Functionally, cytochrome P450 monooxygenase; part of the gene cluster that mediates the biosynthesis of cordypyrones A and B, 2 pyrones that show modest activities against pathogenic bacteria including methicillin-resistant Staphylococcus aureus (MRSA), Mycobacterium tuberculosis and Bacillus cereus. The HR-PKS milA catalyzes the formation of cordypyrones A via condensation of one acetate with 10 malonate units. Since milA lacks an enoyl reductase domain, the 2 beta-keto processing domains DH and KR of milA collaborate with the trans-enoyl reductase milB to catalyze the different levels of reduction. The cytochrome P450 monooxygenase milC then hydroxylates the C-22 of cordypyrones A to yield cordypyrones B. This is Cytochrome P450 monooxygenase milC from Cordyceps militaris (strain CM01) (Caterpillar fungus).